The primary structure comprises 520 residues: Anthranilate synthase component 1 (520 aa).

L-tryptophan contacts are provided by residues serine 40 and 291 to 293; that span reads PYM. 328-329 contacts chorismate; that stretch reads GT. Glutamate 361 provides a ligand contact to Mg(2+). Residues tyrosine 449, arginine 469, 483–485, and glycine 485 each bind chorismate; that span reads GAG. Glutamate 498 lines the Mg(2+) pocket.

The protein belongs to the anthranilate synthase component I family. Heterotetramer consisting of two non-identical subunits: a beta subunit (TrpG) and a large lpha subunit (TrpE). The cofactor is Mg(2+).

It catalyses the reaction chorismate + L-glutamine = anthranilate + pyruvate + L-glutamate + H(+). The protein operates within amino-acid biosynthesis; L-tryptophan biosynthesis; L-tryptophan from chorismate: step 1/5. Its activity is regulated as follows. Cooperatively feedback inhibited by tryptophan. Functionally, part of a heterotetrameric complex that catalyzes the two-step biosynthesis of anthranilate, an intermediate in the biosynthesis of L-tryptophan. In the first step, the glutamine-binding beta subunit (TrpG) of anthranilate synthase (AS) provides the glutamine amidotransferase activity which generates ammonia as a substrate that, along with chorismate, is used in the second step, catalyzed by the large alpha subunit of AS (TrpE) to produce anthranilate. In the absence of TrpG, TrpE can synthesize anthranilate directly from chorismate and high concentrations of ammonia. The protein is Anthranilate synthase component 1 (trpE) of Escherichia coli (strain K12).